Here is a 278-residue protein sequence, read N- to C-terminus: 2-succinyl-6-hydroxy-2,4-cyclohexadiene-1-carboxylate synthase (278 aa).

Belongs to the AB hydrolase superfamily. MenH family. In terms of assembly, monomer.

It catalyses the reaction 5-enolpyruvoyl-6-hydroxy-2-succinyl-cyclohex-3-ene-1-carboxylate = (1R,6R)-6-hydroxy-2-succinyl-cyclohexa-2,4-diene-1-carboxylate + pyruvate. The protein operates within quinol/quinone metabolism; 1,4-dihydroxy-2-naphthoate biosynthesis; 1,4-dihydroxy-2-naphthoate from chorismate: step 3/7. Its pathway is quinol/quinone metabolism; menaquinone biosynthesis. Its function is as follows. Catalyzes a proton abstraction reaction that results in 2,5-elimination of pyruvate from 2-succinyl-5-enolpyruvyl-6-hydroxy-3-cyclohexene-1-carboxylate (SEPHCHC) and the formation of 2-succinyl-6-hydroxy-2,4-cyclohexadiene-1-carboxylate (SHCHC). The sequence is that of 2-succinyl-6-hydroxy-2,4-cyclohexadiene-1-carboxylate synthase from Photorhabdus laumondii subsp. laumondii (strain DSM 15139 / CIP 105565 / TT01) (Photorhabdus luminescens subsp. laumondii).